A 488-amino-acid polypeptide reads, in one-letter code: MIPVVALVGRPNVGKSTLFNRLTRTRDALVADFPGLTRDRKYCRAEWEGHEFIVIDTGGIDGTEEGVETRMAGQSLVAIEEADIVLFMVDGRAGLMAADKGIARHLRSREKTTVIVANKTDGIDADSAVGDFYSLGMGEIVPIAASHGRGINSLLEQVLLPLVSDGLAEAEDEFAPWPDDEAEVLAREEEEEPFDPQSLPIKLAIVGRPNVGKSTLTNRILGEERVVVYDMPGTTRDSIYIPMVRDEREYVLIDTAGVRKRGKVTETVEKFSVIKTLQAIEDANVVLLVIDAREGISDQDLSLLGFILNSGRSLVIAVNKWDGLSSETRDEVKEALDHRLGFIDFARVHFISALHGSGVGNLFESVNEAYQCATKRVSTALLTRIMRMAVDEHQPPLVRGRRVKPKYAHAGGYNPPIVVIHGTQVKDLPDTYKRYLMNYFRRSLGIMGTPIRIQFNEGANPFAGRRNTLTPTQLRKRKRLMSHIKKNK.

2 consecutive EngA-type G domains span residues 3 to 166 and 201 to 374; these read PVVA…VSDG and IKLA…QCAT. GTP is bound by residues 9-16, 56-60, 118-121, 207-214, 254-258, and 319-322; these read GRPNVGKS, DTGGI, NKTD, DTAGV, and NKWD. The region spanning 375-459 is the KH-like domain; it reads KRVSTALLTR…PIRIQFNEGA (85 aa).

Belongs to the TRAFAC class TrmE-Era-EngA-EngB-Septin-like GTPase superfamily. EngA (Der) GTPase family. In terms of assembly, associates with the 50S ribosomal subunit.

GTPase that plays an essential role in the late steps of ribosome biogenesis. This Sodalis glossinidius (strain morsitans) protein is GTPase Der.